The sequence spans 246 residues: MPALSGPQYLGEGLKLIMRPGLRLFVLIPLTLNLLVFALLIGFAMQQFSHWVDLLMPSLPDWLSFLQYIVWPLFVLLVLVIVFFTFTMVANIISAPFNGFLSEKVEVVVRGRDDFPPFSWAELLAMIPRTMGREMRKLAYFLPRALVLLVLSFVPGVNLIATPLWILFGIWMMAVQYIDYPADNHKLGWNEMLAWLRSKRWACMGFGGVTYLALLIPLVNLVMMPAAVAGATLFWVREEGEKALVK.

4 helical membrane passes run 24–44 (LFVL…IGFA), 69–89 (IVWP…FTMV), 148–168 (LLVL…WILF), and 214–234 (LLIP…ATLF).

This sequence belongs to the CysZ family.

The protein localises to the cell inner membrane. Its function is as follows. High affinity, high specificity proton-dependent sulfate transporter, which mediates sulfate uptake. Provides the sulfur source for the cysteine synthesis pathway. The sequence is that of Sulfate transporter CysZ from Pseudomonas aeruginosa (strain LESB58).